Reading from the N-terminus, the 81-residue chain is Cytotoxin 3d (81 aa).

Positions 1–21 (MKTLLLTLVVVTIVCLDLGYT) are cleaved as a signal peptide. 4 cysteine pairs are disulfide-bonded: Cys-24/Cys-42, Cys-35/Cys-59, Cys-63/Cys-74, and Cys-75/Cys-80.

The protein belongs to the three-finger toxin family. Short-chain subfamily. Type IA cytotoxin sub-subfamily. In terms of assembly, monomer in solution; Homodimer and oligomer in the presence of negatively charged lipids forming a pore with a size ranging between 20 and 30 Angstroms. In terms of tissue distribution, expressed by the venom gland.

The protein resides in the secreted. Its subcellular location is the target cell membrane. Its function is as follows. Shows cytolytic activity on many different cells by forming pore in lipid membranes. In vivo, increases heart rate or kills the animal by cardiac arrest. In addition, it binds to heparin with high affinity, interacts with Kv channel-interacting protein 1 (KCNIP1) in a calcium-independent manner, and binds to integrin alpha-V/beta-3 (ITGAV/ITGB3) with moderate affinity. This chain is Cytotoxin 3d, found in Naja atra (Chinese cobra).